A 314-amino-acid polypeptide reads, in one-letter code: uncharacterized protein (314 aa).

Residues 1–70 form a disordered region; that stretch reads MAGNSQRRGA…QGRHKKTDDT (70 aa). Basic residues predominate over residues 44 to 65; it reads RPHHPAGKRAAKAARQAQGRHK. S-adenosyl-L-methionine is bound by residues glycine 265, isoleucine 285, and leucine 294.

Belongs to the class IV-like SAM-binding methyltransferase superfamily. RNA methyltransferase TrmH family.

This is an uncharacterized protein from Mycolicibacterium gilvum (strain PYR-GCK) (Mycobacterium gilvum (strain PYR-GCK)).